An 86-amino-acid chain; its full sequence is Late effector protein 1 (86 aa).

The first 24 residues, 1–24, serve as a signal peptide directing secretion; it reads MRSHQMAAFFAVSLMMMVVLGALS.

It belongs to the lep1 family. As to quaternary structure, interacts at the cell wall with secreted rep1 repellent peptides.

Its subcellular location is the secreted. It localises to the cell wall. Core effector contributing to spore formation and tumor formation at the host plant. Modulates surface hydrophobicity promoting cell-cell or cell-surface contacts. Lep1 and rep1 interact in aerial hyphae to form a strong hydrophobic layer. Plays a crucial role in hyphal aggregation that might be a prerequisite for strong proliferation of diploid cells and for induction of the morphological changes associated with spore formation. The protein is Late effector protein 1 of Mycosarcoma maydis (Corn smut fungus).